We begin with the raw amino-acid sequence, 281 residues long: Aspartate/glutamate leucyltransferase (281 aa).

The protein belongs to the R-transferase family. Bpt subfamily.

The protein localises to the cytoplasm. The catalysed reaction is N-terminal L-glutamyl-[protein] + L-leucyl-tRNA(Leu) = N-terminal L-leucyl-L-glutamyl-[protein] + tRNA(Leu) + H(+). The enzyme catalyses N-terminal L-aspartyl-[protein] + L-leucyl-tRNA(Leu) = N-terminal L-leucyl-L-aspartyl-[protein] + tRNA(Leu) + H(+). Functions in the N-end rule pathway of protein degradation where it conjugates Leu from its aminoacyl-tRNA to the N-termini of proteins containing an N-terminal aspartate or glutamate. The polypeptide is Aspartate/glutamate leucyltransferase (Paracoccus denitrificans (strain Pd 1222)).